The following is a 295-amino-acid chain: Chromatin modification-related protein YNG2 (295 aa).

The tract at residues 151-208 (NGTAGSGSSSGRKRPASSSSANGKGQKRKQQKKERSRSHQRAGTVSRDVSPNAGIGRD) is disordered. Residues 156-171 (SGSSSGRKRPASSSSA) show a composition bias toward low complexity. Positions 175–190 (GQKRKQQKKERSRSHQ) are enriched in basic residues. A PHD-type zinc finger spans residues 233–282 (QLYCFCQRVSYGEMVACDGPNCKYEWFHYSCVNLTEPPKGQWYCPECRLE). Zn(2+) is bound by residues C236, C238, C249, C254, H260, C263, C276, and C279.

The protein belongs to the ING family. In terms of assembly, interacts with H3K4me3 and to a lesser extent with H3K4me2. Component of the NuA4 histone acetyltransferase complex.

It is found in the nucleus. Functionally, component of the NuA4 histone acetyltransferase complex which is involved in transcriptional activation of selected genes principally by acetylation of nucleosomal histone H4 and H2A. The NuA4 complex is also involved in DNA repair. Involved in cell cycle progression and meiosis. The polypeptide is Chromatin modification-related protein YNG2 (YNG2) (Kluyveromyces lactis (strain ATCC 8585 / CBS 2359 / DSM 70799 / NBRC 1267 / NRRL Y-1140 / WM37) (Yeast)).